A 308-amino-acid chain; its full sequence is MTGKHVAVLMGGFSSERPVSLSSGTACAATLEERGYCVTRIDVDRNVASVLAELKPDVAFNALHGPFGEDGAIQGVLEYLQIPYTHSGVLASALAMDKDRAKKVAAAAGVAVASSLLLNRFEIGTEHPMEPPYVVKPVREGSSFGVVIVKEDQTHPPQIISSAEWNYGAEVLVEKYIPGRELTCAVMGDRVMDVCEIIPVGHQFYDYDSKYVAGASSHVCPAKILPNIYQKIQTMALTAHRAIGCRGVSRSDFRFDDRFSDDGEVIWLEINTQPGMTPTSLVPDIAKAAGISFGELLSWMVEDASCLR.

The ATP-grasp domain maps to 102 to 302 (KKVAAAAGVA…FGELLSWMVE (201 aa)). 128-183 (PMEPPYVVKPVREGSSFGVVIVKEDQTHPPQIISSAEWNYGAEVLVEKYIPGRELT) is an ATP binding site. Mg(2+) contacts are provided by Asp252, Glu269, and Asn271.

This sequence belongs to the D-alanine--D-alanine ligase family. Mg(2+) is required as a cofactor. Mn(2+) serves as cofactor.

It localises to the cytoplasm. The catalysed reaction is 2 D-alanine + ATP = D-alanyl-D-alanine + ADP + phosphate + H(+). The protein operates within cell wall biogenesis; peptidoglycan biosynthesis. Its function is as follows. Cell wall formation. The polypeptide is D-alanine--D-alanine ligase (Brucella anthropi (strain ATCC 49188 / DSM 6882 / CCUG 24695 / JCM 21032 / LMG 3331 / NBRC 15819 / NCTC 12168 / Alc 37) (Ochrobactrum anthropi)).